The following is a 1912-amino-acid chain: Chromodomain-helicase-DNA-binding protein 4 (1912 aa).

Residues 1–157 (MASGLGSPSP…PKSSAQLLED (157 aa)) form a disordered region. Residues 35-45 (NEEDPEEDLSE) are compositionally biased toward acidic residues. Serine 44 carries the post-translational modification Phosphoserine. The segment covering 113-131 (GKKKKKKLGPKKEKKSKSK) has biased composition (basic residues). Lysine 133 is covalently cross-linked (Glycyl lysine isopeptide (Lys-Gly) (interchain with G-Cter in SUMO2)). The segment covering 135-145 (EEEEEDDDDDS) has biased composition (acidic residues). Residues lysine 146, lysine 179, and lysine 297 each participate in a glycyl lysine isopeptide (Lys-Gly) (interchain with G-Cter in SUMO2) cross-link. The segment at 243–360 (ATEVAPPPPP…KKKKGEEEVT (118 aa)) is disordered. Positions 295–298 (KIKL) match the KIKL motif. Serine 303 carries the phosphoserine modification. Lysine 304 participates in a covalent cross-link: Glycyl lysine isopeptide (Lys-Gly) (interchain with G-Cter in SUMO2). Phosphoserine is present on residues serine 308, serine 309, serine 310, and serine 319. The span at 311-323 (EDDDLDVESDFDD) shows a compositional bias: acidic residues. Residues 340–353 (SRSRKKLRTTKKKK) show a composition bias toward basic residues. Threonine 367 bears the Phosphothreonine mark. Residues 370–417 (QDYCEVCQQGGEIILCDTCPRAYHMVCLDPDMEKAPEGKWSCPHCEKE) form a PHD-type 1 zinc finger. The residue at position 428 (serine 428) is a Phosphoserine. The segment at 449 to 496 (MEFCRVCKDGGELLCCDTCPSSYHIHCLNPPLPEIPNGEWLCPRCTCP) adopts a PHD-type 2 zinc-finger fold. Residues 494-594 (TCPALKGKVQ…SGDFGGDEEK (101 aa)) form the Chromo 1 domain. Disordered regions lie at residues 510-537 (WGQP…PLEG) and 578-603 (NDMD…NKDP). A compositionally biased stretch (pro residues) spans 513-522 (PPSPTPVPRP). The residue at position 515 (serine 515) is a Phosphoserine. A phosphothreonine mark is found at threonine 517 and threonine 529. Serine 531 is modified (phosphoserine). Glycyl lysine isopeptide (Lys-Gly) (interchain with G-Cter in SUMO2) cross-links involve residues lysine 618 and lysine 696. Positions 622–697 (MMIHRILNHS…KLKKVKLRKL (76 aa)) constitute a Chromo 2 domain. Threonine 703 is subject to Phosphothreonine. Lysine 711 is covalently cross-linked (Glycyl lysine isopeptide (Lys-Gly) (interchain with G-Cter in SUMO1); alternate). Lysine 711 participates in a covalent cross-link: Glycyl lysine isopeptide (Lys-Gly) (interchain with G-Cter in SUMO2); alternate. The Helicase ATP-binding domain maps to 738–922 (RFSWAQGTDT…FHLLNFLTPE (185 aa)). Residue 751-758 (DEMGLGKT) coordinates ATP. A DEAH box motif is present at residues 873–876 (DEAH). Positions 1054 to 1203 (LLQKMLKNLK…LTHLVVRPGL (150 aa)) constitute a Helicase C-terminal domain. Serine 1209 bears the Phosphoserine mark. Residues lysine 1212, lysine 1228, lysine 1239, and lysine 1304 each participate in a glycyl lysine isopeptide (Lys-Gly) (interchain with G-Cter in SUMO2) cross-link. Residues serine 1308, serine 1349, and serine 1370 each carry the phosphoserine modification. 2 disordered regions span residues 1344–1401 (NYND…KPLP) and 1525–1562 (EENK…PAED). Glycyl lysine isopeptide (Lys-Gly) (interchain with G-Cter in SUMO2) cross-links involve residues lysine 1528 and lysine 1529. Phosphoserine is present on residues serine 1531, serine 1535, and serine 1537. The span at 1535 to 1544 (SPSPKTPTPS) shows a compositional bias: pro residues. 3 positions are modified to phosphothreonine: threonine 1542, threonine 1549, and threonine 1553. Lysine 1565 participates in a covalent cross-link: Glycyl lysine isopeptide (Lys-Gly) (interchain with G-Cter in SUMO2). A Phosphoserine modification is found at serine 1570. Residues 1570 to 1584 (SLKEEESIEGEKEVK) show a composition bias toward basic and acidic residues. 2 disordered regions span residues 1570–1589 (SLKE…TAPE) and 1594–1644 (CTQA…VEKV). Residue lysine 1572 forms a Glycyl lysine isopeptide (Lys-Gly) (interchain with G-Cter in SUMO2) linkage. Serine 1576 carries the phosphoserine modification. Residues 1577 to 1912 (IEGEKEVKST…PTPQQVAQQQ (336 aa)) are required for interaction with PCNT. A Glycyl lysine isopeptide (Lys-Gly) (interchain with G-Cter in SUMO2) cross-link involves residue lysine 1584. Serine 1602 carries the phosphoserine modification. Residues 1603–1644 (EDEKVVVEPPEGEEKVEKAEVKERTEEPMETEPKGAADVEKV) show a composition bias toward basic and acidic residues. Residues lysine 1606, lysine 1617, and lysine 1636 each participate in a glycyl lysine isopeptide (Lys-Gly) (interchain with G-Cter in SUMO2) cross-link. Residue lysine 1643 forms a Glycyl lysine isopeptide (Lys-Gly) (interchain with G-Cter in SUMO2); alternate linkage. At lysine 1643 the chain carries N6-acetyllysine; alternate. Lysine 1647 participates in a covalent cross-link: Glycyl lysine isopeptide (Lys-Gly) (interchain with G-Cter in SUMO2). Threonine 1653 is subject to Phosphothreonine. Residues lysine 1660 and lysine 1670 each participate in a glycyl lysine isopeptide (Lys-Gly) (interchain with G-Cter in SUMO2) cross-link. Threonine 1679 carries the post-translational modification Phosphothreonine. Glycyl lysine isopeptide (Lys-Gly) (interchain with G-Cter in SUMO2) cross-links involve residues lysine 1687 and lysine 1865.

The protein belongs to the SNF2/RAD54 helicase family. As to quaternary structure, component of the nucleosome remodeling and deacetylase (NuRD) repressor complex, composed of core proteins MTA1, MTA2, MTA3, RBBP4, RBBP7, HDAC1, HDAC2, MBD2, MBD3, and peripherally associated proteins CDK2AP1, CDK2AP2, GATAD2A, GATAD2B, CHD3, CHD4 and CHD5. The exact stoichiometry of the NuRD complex is unknown, and some subunits such as MBD2 and MBD3, GATAD2A and GATAD2B, and CHD3, CHD4 and CHD5 define mutually exclusive NuRD complexes. Interacts with IKFZ1; the interaction is direct and when in part of the NuRD complex. Part of a complex containing ATR and HDAC2. Interacts with HDAC2; the interaction is direct. Interacts with the cohesin complex component RAD21; the interaction is direct. Interacts with the ISWI chromatin remodeling complex component SMARCA5; the interaction is direct. Interacts with ZGPAT; the interaction is direct. Interacts with ZMYND8; the interaction is direct, appears to occur with monomeric ZMYND8, and is increased following DNA damage. Interacts with BCL6. Interacts with BRD4. Interacts with CBX1. Interacts with CBX3. Interacts with CBX5. Interacts with GATAD2A. Interacts with HDAC1. Interacts with KLF1; the interaction depends on sumoylation of KLF1, and leads to its transcriptional repression. Interacts with MTA1. Interacts with PCNT. Interacts with RBBP7. Interacts with SETX. Interacts with TRIM27. Interacts with histone H3. Interacts with histone H4. Does not interact with PWWP2A. Does not interact with PWWP2B. Interacts (via KIKL motif) with BRD3 (via NET domain). It depends on Zn(2+) as a cofactor. In terms of tissue distribution, widely expressed.

It localises to the nucleus. It is found in the cytoplasm. The protein resides in the cytoskeleton. Its subcellular location is the microtubule organizing center. The protein localises to the centrosome. It carries out the reaction ATP + H2O = ADP + phosphate + H(+). Its function is as follows. ATP-dependent chromatin-remodeling factor that binds and distorts nucleosomal DNA. Acts as a component of the histone deacetylase NuRD complex which participates in the remodeling of chromatin. Localizes to acetylated damaged chromatin in a ZMYND8-dependent manner, to promote transcriptional repression and double-strand break repair by homologous recombination. Involved in neurogenesis. This chain is Chromodomain-helicase-DNA-binding protein 4 (CHD4), found in Homo sapiens (Human).